A 214-amino-acid polypeptide reads, in one-letter code: Putative ras-related protein Rab-5B (214 aa).

56 to 63 (GEMNTGKT) lines the GTP pocket. The Effector region signature appears at 77 to 85 (TDSTIGAAF). GTP contacts are provided by residues 103-107 (DTAGQ) and 161-164 (NKVD).

It belongs to the small GTPase superfamily. Rab family. In terms of processing, this sequence lacks the C-terminal cysteine motifs subject to isoprenylation in other Rab proteins.

This is Putative ras-related protein Rab-5B (rab5B) from Dictyostelium discoideum (Social amoeba).